We begin with the raw amino-acid sequence, 450 residues long: Chromosomal replication initiator protein DnaA (450 aa).

Residues 1 to 79 (MENIHDLWNR…TGEELLIKFI (79 aa)) are domain I, interacts with DnaA modulators. A domain II region spans residues 79-111 (ITPPNQSEDDFEFQRSSKKHRKPYEESTDFPQS). Residues 112–328 (MLNPKYTFDT…GALIRVVAYS (217 aa)) form a domain III, AAA+ region region. ATP-binding residues include G156, G158, K159, and T160. The interval 329–450 (SLINKEITAD…KEIEEKLKQL (122 aa)) is domain IV, binds dsDNA.

The protein belongs to the DnaA family. In terms of assembly, oligomerizes as a right-handed, spiral filament on DNA at oriC.

It is found in the cytoplasm. In terms of biological role, plays an essential role in the initiation and regulation of chromosomal replication. ATP-DnaA binds to the origin of replication (oriC) to initiate formation of the DNA replication initiation complex once per cell cycle. Binds the DnaA box (a 9 base pair repeat at the origin) and separates the double-stranded (ds)DNA. Forms a right-handed helical filament on oriC DNA; dsDNA binds to the exterior of the filament while single-stranded (ss)DNA is stabiized in the filament's interior. The ATP-DnaA-oriC complex binds and stabilizes one strand of the AT-rich DNA unwinding element (DUE), permitting loading of DNA polymerase. After initiation quickly degrades to an ADP-DnaA complex that is not apt for DNA replication. Binds acidic phospholipids. The chain is Chromosomal replication initiator protein DnaA from Geobacillus sp. (strain WCH70).